The chain runs to 900 residues: Trehalose-phosphatase (900 aa).

2 disordered regions span residues 76–109 (SRLF…EEDP) and 874–900 (VKHS…SYKN). Basic and acidic residues predominate over residues 82–108 (KNRDKSENGEKGENDLHAKEEREKEED).

This sequence in the C-terminal section; belongs to the trehalose phosphatase family. It in the N-terminal section; belongs to the glycosyltransferase 20 family. The cofactor is Mg(2+).

It carries out the reaction alpha,alpha-trehalose 6-phosphate + H2O = alpha,alpha-trehalose + phosphate. It functions in the pathway carbohydrate biosynthesis. In terms of biological role, phosphatase catalytic subunit of the trehalose synthase complex that catalyzes the production of trehalose from glucose-6-phosphate and UDP-alpha-D-glucose in a two step process. The polypeptide is Trehalose-phosphatase (Zygosaccharomyces rouxii).